The chain runs to 424 residues: Zinc finger and BTB domain-containing protein 6 (424 aa).

A BTB domain is found at cysteine 33–arginine 97. Position 202 is a phosphoserine (serine 202). 4 consecutive C2H2-type zinc fingers follow at residues histidine 301–histidine 323, phenylalanine 326–histidine 348, phenylalanine 354–histidine 376, and tyrosine 382–histidine 405. The disordered stretch occupies residues serine 403–leucine 424. Over residues serine 408–leucine 424 the composition is skewed to basic and acidic residues.

It is found in the nucleus. May be involved in transcriptional regulation. The polypeptide is Zinc finger and BTB domain-containing protein 6 (ZBTB6) (Bos taurus (Bovine)).